A 90-amino-acid polypeptide reads, in one-letter code: Mitochondrial import inner membrane translocase subunit Tim9 (90 aa).

The Twin CX3C motif motif lies at 24–48; that stretch reads CFNSCVNEFGSRTVSGKEESCANNC. Disulfide bonds link Cys24–Cys48 and Cys28–Cys44.

The protein belongs to the small Tim family. As to quaternary structure, heterohexamer; composed of 3 copies of tim-9/tin-9.1 and 3 copies of tim-10/tin-10, named soluble 70 kDa complex. The complex associates with the tim-22 component of the TIM22 complex. Interacts with multi-pass transmembrane proteins in transit.

The protein localises to the mitochondrion inner membrane. Functionally, mitochondrial intermembrane chaperone that participates in the import and insertion of multi-pass transmembrane proteins into the mitochondrial inner membrane. May also be required for the transfer of beta-barrel precursors from the TOM complex to the sorting and assembly machinery (SAM complex) of the outer membrane. Acts as a chaperone-like protein that protects the hydrophobic precursors from aggregation and guide them through the mitochondrial intermembrane space. In Caenorhabditis elegans, this protein is Mitochondrial import inner membrane translocase subunit Tim9 (tin-9.1).